The following is a 222-amino-acid chain: Triosephosphate isomerase (222 aa).

Residue 9–11 (NYK) participates in substrate binding. Residue histidine 93 is the Electrophile of the active site. Glutamate 141 (proton acceptor) is an active-site residue. Substrate contacts are provided by residues isoleucine 146, glycine 181, and 202–203 (AS).

Belongs to the triosephosphate isomerase family. In terms of assembly, homotetramer; dimer of dimers.

The protein resides in the cytoplasm. It catalyses the reaction D-glyceraldehyde 3-phosphate = dihydroxyacetone phosphate. The protein operates within carbohydrate biosynthesis; gluconeogenesis. It functions in the pathway carbohydrate degradation; glycolysis; D-glyceraldehyde 3-phosphate from glycerone phosphate: step 1/1. Involved in the gluconeogenesis. Catalyzes stereospecifically the conversion of dihydroxyacetone phosphate (DHAP) to D-glyceraldehyde-3-phosphate (G3P). This is Triosephosphate isomerase from Methanosarcina acetivorans (strain ATCC 35395 / DSM 2834 / JCM 12185 / C2A).